A 152-amino-acid polypeptide reads, in one-letter code: UPF0225 protein YchJ (152 aa).

Belongs to the UPF0225 family.

The protein is UPF0225 protein YchJ of Escherichia coli O7:K1 (strain IAI39 / ExPEC).